The following is a 564-amino-acid chain: Nucleolus and neural progenitor protein (564 aa).

A disordered region spans residues 431-495; the sequence is GSRTSTSEHP…KRRCSGTVQR (65 aa). Over residues 442 to 459 the composition is skewed to basic residues; sequence RQRRSKYKVLSRQRKPQR. Residues 442-460 are nuclear localization signal; that stretch reads RQRRSKYKVLSRQRKPQRK. Over residues 460–473 the composition is skewed to polar residues; it reads KLQSTLLKETQQVP.

This sequence belongs to the nepro family.

The protein resides in the nucleus. The protein localises to the nucleolus. May play a role in cortex development as part of the Notch signaling pathway. Downstream of Notch may repress the expression of proneural genes and inhibit neuronal differentiation thereby maintaining neural progenitors. May also play a role in preimplentation embryo development. This Mus musculus (Mouse) protein is Nucleolus and neural progenitor protein.